The sequence spans 510 residues: GMP synthase [glutamine-hydrolyzing] (510 aa).

The Glutamine amidotransferase type-1 domain occupies 5–195 (LVIVLDFGGQ…LFNIADLSAD (191 aa)). The active-site Nucleophile is the Cys82. Catalysis depends on residues His169 and Glu171. The GMPS ATP-PPase domain occupies 196-385 (WTMGSYIEET…LGLHREIVER (190 aa)). Residue 223–229 (SGGIDST) coordinates ATP.

As to quaternary structure, homodimer.

It catalyses the reaction XMP + L-glutamine + ATP + H2O = GMP + L-glutamate + AMP + diphosphate + 2 H(+). The protein operates within purine metabolism; GMP biosynthesis; GMP from XMP (L-Gln route): step 1/1. Its function is as follows. Catalyzes the synthesis of GMP from XMP. The chain is GMP synthase [glutamine-hydrolyzing] from Natranaerobius thermophilus (strain ATCC BAA-1301 / DSM 18059 / JW/NM-WN-LF).